Consider the following 283-residue polypeptide: Arylamine N-acetyltransferase (283 aa).

Catalysis depends on Cys-70, which acts as the Acyl-thioester intermediate. Residues His-110 and Asp-127 contribute to the active site.

It belongs to the arylamine N-acetyltransferase family. Homodimer and homotetramer.

The enzyme catalyses an arylamine + acetyl-CoA = an N-acetylarylamine + CoA. In terms of biological role, catalyzes the transfer of the acetyl group from acetyl coenzyme A to the free amino group of arylamines and hydrazines. Is able to utilize not only acetyl-CoA, but also n-propionyl-CoA and acetoacetyl-CoA as acyl donors, although at a lower rate. As acetyl-CoA and propionyl-CoA are products of cholesterol catabolism and the nat gene is likely present in the same operon than genes involved in cholesterol degradation, this enzyme could have a role in the utilization and regulation of these CoA species. The polypeptide is Arylamine N-acetyltransferase (nat) (Mycobacterium bovis (strain ATCC BAA-935 / AF2122/97)).